We begin with the raw amino-acid sequence, 926 residues long: Alanine--tRNA ligase (926 aa).

The Zn(2+) site is built by His615, His619, Cys719, and His723. Residues 887–910 form a disordered region; sequence RVGGGGGGPPDFAQGGGPDADALD. Positions 888 to 904 are enriched in gly residues; sequence VGGGGGGPPDFAQGGGP.

The protein belongs to the class-II aminoacyl-tRNA synthetase family. The cofactor is Zn(2+).

Its subcellular location is the cytoplasm. The enzyme catalyses tRNA(Ala) + L-alanine + ATP = L-alanyl-tRNA(Ala) + AMP + diphosphate. Its function is as follows. Catalyzes the attachment of alanine to tRNA(Ala) in a two-step reaction: alanine is first activated by ATP to form Ala-AMP and then transferred to the acceptor end of tRNA(Ala). Also edits incorrectly charged Ser-tRNA(Ala) and Gly-tRNA(Ala) via its editing domain. The chain is Alanine--tRNA ligase from Halorubrum lacusprofundi (strain ATCC 49239 / DSM 5036 / JCM 8891 / ACAM 34).